We begin with the raw amino-acid sequence, 119 residues long: NADH-quinone oxidoreductase subunit A (119 aa).

Helical transmembrane passes span 9–29, 63–83, and 88–108; these read VLLF…LGYV, LVAI…PWAV, and VGMT…VGFA.

It belongs to the complex I subunit 3 family. As to quaternary structure, NDH-1 is composed of 14 different subunits. Subunits NuoA, H, J, K, L, M, N constitute the membrane sector of the complex.

It is found in the cell inner membrane. The enzyme catalyses a quinone + NADH + 5 H(+)(in) = a quinol + NAD(+) + 4 H(+)(out). In terms of biological role, NDH-1 shuttles electrons from NADH, via FMN and iron-sulfur (Fe-S) centers, to quinones in the respiratory chain. The immediate electron acceptor for the enzyme in this species is believed to be ubiquinone. Couples the redox reaction to proton translocation (for every two electrons transferred, four hydrogen ions are translocated across the cytoplasmic membrane), and thus conserves the redox energy in a proton gradient. The chain is NADH-quinone oxidoreductase subunit A from Paracidovorax citrulli (strain AAC00-1) (Acidovorax citrulli).